The primary structure comprises 47 residues: Snake venom metalloproteinase jararafibrase-4 (47 aa).

The 42-residue stretch at 6–47 folds into the Peptidase M12B domain; that stretch reads RYIELFLVVDHGMFMKYNGNSDKIYYYIHQMVNIMKXAYXYL. Glu9 is a binding site for Ca(2+).

The protein belongs to the venom metalloproteinase (M12B) family. As to quaternary structure, monomer. Zn(2+) is required as a cofactor. Expressed by the venom gland.

The protein resides in the secreted. With respect to regulation, inhibited by 1,10-phenanthroline and EDTA. Functionally, the metalloproteinase is a probable venom zinc protease that induces local hemorrhage in the skin of rats. Degrades type-IV collagen, gelatin, laminin and fibronectin. Has fibrinolytic activities. Has high hemagglutinating activity on red blood cells. Cleaves insulin B chain at 29-His-|-Leu-30, and 38-Ala-|-Leu-39 bonds. The polypeptide is Snake venom metalloproteinase jararafibrase-4 (Bothrops jararaca (Jararaca)).